We begin with the raw amino-acid sequence, 498 residues long: Polygalacturonan/rhamnogalacturonan-binding protein YtcQ (498 aa).

An N-terminal signal peptide occupies residues 1–22; sequence MGNKWRVLLIVLVLALGGVLAG. A lipid anchor (N-palmitoyl cysteine) is attached at C23. Residue C23 is the site of S-diacylglycerol cysteine attachment.

It belongs to the bacterial solute-binding protein 1 family. In terms of assembly, the complex is probably composed of two ATP-binding proteins (MsmX), two transmembrane proteins (YtcP and YteP) and a solute-binding protein (YtcQ).

It is found in the cell membrane. Involved in pectin degradation. Part of the ABC transporter complex YtcQP-YteP involved in the uptake of polygalacturonan and rhamnogalacturonan type I. The chain is Polygalacturonan/rhamnogalacturonan-binding protein YtcQ (ytcQ) from Bacillus subtilis (strain 168).